We begin with the raw amino-acid sequence, 284 residues long: Isopentenyl-diphosphate Delta-isomerase II, chloroplastic (284 aa).

The transit peptide at 1 to 45 (MSASSLFNLPLIRLRSLALSSSFSSFRFAHRPLSSISPRKLPNFR) directs the protein to the chloroplast. N-acetylalanine is present on A46. Residue K88 coordinates substrate. Positions 92 and 104 each coordinate Mg(2+). In terms of domain architecture, Nudix hydrolase spans 102 to 254 (LLHRAFSVFL…GLKLSPWFRL (153 aa)). Substrate-binding residues include R123 and K127. The active site involves C139. S140 contacts substrate. The Nudix box motif lies at 140 to 170 (SHPLYRESELIQDNALGVRNAAQRKLLDELG). Mg(2+)-binding residues include E199 and E201. The active site involves E201.

Belongs to the IPP isomerase type 1 family. Requires Mg(2+) as cofactor.

It localises to the plastid. It is found in the chloroplast. The catalysed reaction is isopentenyl diphosphate = dimethylallyl diphosphate. The protein operates within isoprenoid biosynthesis; dimethylallyl diphosphate biosynthesis; dimethylallyl diphosphate from isopentenyl diphosphate: step 1/1. It participates in porphyrin-containing compound metabolism; chlorophyll biosynthesis. Catalyzes the 1,3-allylic rearrangement of the homoallylic substrate isopentenyl (IPP) to its highly electrophilic allylic isomer, dimethylallyl diphosphate (DMAPP). The polypeptide is Isopentenyl-diphosphate Delta-isomerase II, chloroplastic (IPP2) (Arabidopsis thaliana (Mouse-ear cress)).